A 520-amino-acid polypeptide reads, in one-letter code: Maturase K (520 aa).

It belongs to the intron maturase 2 family. MatK subfamily.

It is found in the plastid. The protein localises to the chloroplast. Usually encoded in the trnK tRNA gene intron. Probably assists in splicing its own and other chloroplast group II introns. The sequence is that of Maturase K from Maianthemum dilatatum (False lily-of-the-valley).